A 249-amino-acid polypeptide reads, in one-letter code: Small ribosomal subunit protein eS6 (249 aa).

A compositionally biased stretch (basic residues) spans 223-238 (LRQRDHSKKHTQKVHA). Residues 223–249 (LRQRDHSKKHTQKVHAQRAEVAAFQKK) are disordered.

It belongs to the eukaryotic ribosomal protein eS6 family. Component of the small ribosomal subunit. Part of the small subunit (SSU) processome, composed of more than 70 proteins and the RNA chaperone small nucleolar RNA (snoRNA) U3. Post-translationally, ribosomal protein S6 is the major substrate of protein kinases in eukaryote ribosomes.

Its subcellular location is the cytoplasm. It is found in the nucleus. The protein localises to the nucleolus. Its function is as follows. Component of the 40S small ribosomal subunit. Plays an important role in controlling cell growth and proliferation through the selective translation of particular classes of mRNA. Part of the small subunit (SSU) processome, first precursor of the small eukaryotic ribosomal subunit. During the assembly of the SSU processome in the nucleolus, many ribosome biogenesis factors, an RNA chaperone and ribosomal proteins associate with the nascent pre-rRNA and work in concert to generate RNA folding, modifications, rearrangements and cleavage as well as targeted degradation of pre-ribosomal RNA by the RNA exosome. The chain is Small ribosomal subunit protein eS6 (RPS6) from Leishmania infantum.